Here is a 249-residue protein sequence, read N- to C-terminus: MIT domain-containing protein 1 (249 aa).

The 79-residue stretch at 8 to 86 folds into the MIT domain; it reads QDPQSTAAAT…KYLDQEKEDG (79 aa). Residues 168–231 are important for association with membranes; sequence RGLQEIEESL…SLGYCDFDLR (64 aa).

In terms of assembly, homodimer. Interacts (via MIT domain) with CHMP1A, CHMP1B, CHMP2A and IST1.

It is found in the late endosome membrane. Its subcellular location is the midbody. The protein localises to the membrane. Its function is as follows. Required for efficient abscission at the end of cytokinesis, together with components of the ESCRT-III complex. In Homo sapiens (Human), this protein is MIT domain-containing protein 1 (MITD1).